Consider the following 167-residue polypeptide: NADH-quinone oxidoreductase subunit B 2 (167 aa).

[4Fe-4S] cluster is bound by residues C39, C40, C104, and C134.

It belongs to the complex I 20 kDa subunit family. NDH-1 is composed of 14 different subunits. Subunits NuoB, C, D, E, F, and G constitute the peripheral sector of the complex. [4Fe-4S] cluster is required as a cofactor.

Its subcellular location is the cell inner membrane. The catalysed reaction is a quinone + NADH + 5 H(+)(in) = a quinol + NAD(+) + 4 H(+)(out). NDH-1 shuttles electrons from NADH, via FMN and iron-sulfur (Fe-S) centers, to quinones in the respiratory chain. Couples the redox reaction to proton translocation (for every two electrons transferred, four hydrogen ions are translocated across the cytoplasmic membrane), and thus conserves the redox energy in a proton gradient. In Burkholderia mallei (strain NCTC 10247), this protein is NADH-quinone oxidoreductase subunit B 2.